An 84-amino-acid polypeptide reads, in one-letter code: Transcription elongation factor 1 homolog (84 aa).

Residues Cys26, Cys29, Cys50, and Cys53 each contribute to the Zn(2+) site.

The protein belongs to the ELOF1 family.

It is found in the nucleus. Functionally, transcription elongation factor implicated in the maintenance of proper chromatin structure in actively transcribed regions. This Caenorhabditis elegans protein is Transcription elongation factor 1 homolog.